A 153-amino-acid chain; its full sequence is Putative trans-acting regulator pXO2-62/BXB0076/GBAA_pXO2_0076 (153 aa).

It belongs to the AtxA/AcpA family.

In Bacillus anthracis, this protein is Putative trans-acting regulator pXO2-62/BXB0076/GBAA_pXO2_0076.